Reading from the N-terminus, the 541-residue chain is ATP synthase subunit beta (541 aa).

Residues 1 to 65 form a disordered region; sequence MAKAVTSSKG…TPVKKEERAK (65 aa). Composition is skewed to basic and acidic residues over residues 25-36 and 52-65; these read VKKDASKSKDAS and AAKD…ERAK. Residue 214-221 coordinates ATP; sequence GGAGVGKT.

The protein belongs to the ATPase alpha/beta chains family. As to quaternary structure, F-type ATPases have 2 components, CF(1) - the catalytic core - and CF(0) - the membrane proton channel. CF(1) has five subunits: alpha(3), beta(3), gamma(1), delta(1), epsilon(1). CF(0) has three main subunits: a(1), b(2) and c(9-12). The alpha and beta chains form an alternating ring which encloses part of the gamma chain. CF(1) is attached to CF(0) by a central stalk formed by the gamma and epsilon chains, while a peripheral stalk is formed by the delta and b chains.

It localises to the cell inner membrane. The catalysed reaction is ATP + H2O + 4 H(+)(in) = ADP + phosphate + 5 H(+)(out). Functionally, produces ATP from ADP in the presence of a proton gradient across the membrane. The catalytic sites are hosted primarily by the beta subunits. This Bartonella tribocorum (strain CIP 105476 / IBS 506) protein is ATP synthase subunit beta.